The primary structure comprises 61 residues: Myrmicitoxin(1)-Pm5a (61 aa).

The N-terminal stretch at Met-1 to Gly-23 is a signal peptide. The propeptide occupies Glu-24 to Ser-33. At Gln-60 the chain carries Glutamine amide.

Belongs to the formicidae venom clade 2 family. Expressed by the venom gland.

Its subcellular location is the secreted. In terms of biological role, toxin that causes a rapid and irreversible paralysis when intrathoracically injected into insects (blowflies). Does not cause spontaneous nocifensive behaviors by intraplantar injection in mice. The sequence is that of Myrmicitoxin(1)-Pm5a from Pogonomyrmex maricopa (Maricopa harvester ant).